Reading from the N-terminus, the 483-residue chain is Uridine/cytidine kinase UKL1, chloroplastic (483 aa).

The N-terminal 47 residues, 1 to 47 (MPEDSTAIDYVMEKASGPHFSGLRLDGLLSSPSKSSVSSPSHFRLSN), are a transit peptide targeting the chloroplast. Residues 59–264 (PHQPFVIGVT…IVQHIHTKLG (206 aa)) are uridine kinase. Residues 274-483 (NVFVIETTFQ…FGDRYFGTDE (210 aa)) form a uracil phosphoribosyltransferase region. GTP contacts are provided by residues lysine 298, arginine 307, and 341-344 (CKKL). 5-phospho-alpha-D-ribose 1-diphosphate is bound by residues arginine 351 and arginine 376. Arginine 396 contacts GTP. 5-phospho-alpha-D-ribose 1-diphosphate contacts are provided by residues aspartate 402, 407 to 410 (TGNS), and glutamate 473. Residue 472–474 (GEF) participates in uracil binding.

This sequence in the N-terminal section; belongs to the uridine kinase family. The protein in the C-terminal section; belongs to the UPRTase family.

It localises to the plastid. Its subcellular location is the chloroplast. It catalyses the reaction cytidine + ATP = CMP + ADP + H(+). The enzyme catalyses uridine + ATP = UMP + ADP + H(+). It participates in pyrimidine metabolism; CTP biosynthesis via salvage pathway; CTP from cytidine: step 1/3. It functions in the pathway pyrimidine metabolism; UMP biosynthesis via salvage pathway; UMP from uridine: step 1/1. Functionally, involved in the pyrimidine salvage pathway. Phosphorylates uridine to uridine monophosphate (UMP). Phosphorylates cytidine to cytidine monophosphate (CMP). Does not possess uracil phosphoribosyltransferase (UPRTase) activity that catalyzes the conversion of uracil and 5-phospho-alpha-D-ribose 1-diphosphate (PRPP) to UMP and diphosphate. The sequence is that of Uridine/cytidine kinase UKL1, chloroplastic from Arabidopsis thaliana (Mouse-ear cress).